The chain runs to 495 residues: WD repeat-containing protein 37 (495 aa).

The interval 1 to 34 is disordered; the sequence is MPTESGSWAAARQTKQKRKSHSLSIKRTNSSEQD. Polar residues predominate over residues 22-31; sequence SLSIKRTNSS. 2 WD repeats span residues 154-194 and 197-236; these read GHRD…CLIK and GHAG…PTPQ. The segment at 237–268 is disordered; that stretch reads PMADTSQISGEEEVDFSDKDENDGDGDASSDC. The segment covering 246 to 264 has biased composition (acidic residues); sequence GEEEVDFSDKDENDGDGDA. 5 WD repeats span residues 280–319, 322–361, 366–404, 407–446, and 453–494; these read SHQG…LVHS, GHDQ…IHSV, GHTD…SPIA, RTDS…LARL, and GHRR…LLQE.

The protein resides in the cytoplasm. It localises to the nucleus. In Xenopus laevis (African clawed frog), this protein is WD repeat-containing protein 37 (wdr37).